Here is a 263-residue protein sequence, read N- to C-terminus: Proteasome subunit alpha type-1 (263 aa).

At Met-1 the chain carries N-acetylmethionine. The residue at position 110 (Ser-110) is a Phosphoserine; alternate. O-linked (GlcNAc) serine; alternate glycosylation is present at Ser-110. Residue Lys-115 forms a Glycyl lysine isopeptide (Lys-Gly) (interchain with G-Cter in ubiquitin) linkage. Ser-177 is subject to Phosphoserine. A Glycyl lysine isopeptide (Lys-Gly) (interchain with G-Cter in ubiquitin) cross-link involves residue Lys-208. The interval 232–263 (FLEGLEERPQRKAQPTQPADEPAEKADEPMEH) is disordered. Basic and acidic residues predominate over residues 253–263 (PAEKADEPMEH).

This sequence belongs to the peptidase T1A family. The 26S proteasome consists of a 20S proteasome core and two 19S regulatory subunits. The 20S proteasome core is a barrel-shaped complex made of 28 subunits that are arranged in four stacked rings. The two outer rings are each formed by seven alpha subunits, and the two inner rings are formed by seven beta subunits. The proteolytic activity is exerted by three beta-subunits PSMB5, PSMB6 and PSMB7. Interacts with NOTCH3. Interacts with ZFAND1.

The protein localises to the cytoplasm. Its subcellular location is the nucleus. In terms of biological role, component of the 20S core proteasome complex involved in the proteolytic degradation of most intracellular proteins. This complex plays numerous essential roles within the cell by associating with different regulatory particles. Associated with two 19S regulatory particles, forms the 26S proteasome and thus participates in the ATP-dependent degradation of ubiquitinated proteins. The 26S proteasome plays a key role in the maintenance of protein homeostasis by removing misfolded or damaged proteins that could impair cellular functions, and by removing proteins whose functions are no longer required. Associated with the PA200 or PA28, the 20S proteasome mediates ubiquitin-independent protein degradation. This type of proteolysis is required in several pathways including spermatogenesis (20S-PA200 complex) or generation of a subset of MHC class I-presented antigenic peptides (20S-PA28 complex). The protein is Proteasome subunit alpha type-1 (PSMA1) of Bos taurus (Bovine).